Reading from the N-terminus, the 185-residue chain is A-type ATP synthase subunit E (185 aa).

Belongs to the V-ATPase E subunit family. Has multiple subunits with at least A(3), B(3), C, D, E, F, H, I and proteolipid K(x).

The protein localises to the cell membrane. Its function is as follows. Component of the A-type ATP synthase that produces ATP from ADP in the presence of a proton gradient across the membrane. This chain is A-type ATP synthase subunit E, found in Thermoplasma volcanium (strain ATCC 51530 / DSM 4299 / JCM 9571 / NBRC 15438 / GSS1).